A 463-amino-acid chain; its full sequence is ATP-dependent protease ATPase subunit HslU (463 aa).

ATP contacts are provided by residues Ile-19, 61–66, Asp-277, Glu-341, and Arg-413; that span reads GVGKTE.

This sequence belongs to the ClpX chaperone family. HslU subfamily. In terms of assembly, a double ring-shaped homohexamer of HslV is capped on each side by a ring-shaped HslU homohexamer. The assembly of the HslU/HslV complex is dependent on binding of ATP.

Its subcellular location is the cytoplasm. In terms of biological role, ATPase subunit of a proteasome-like degradation complex; this subunit has chaperone activity. The binding of ATP and its subsequent hydrolysis by HslU are essential for unfolding of protein substrates subsequently hydrolyzed by HslV. HslU recognizes the N-terminal part of its protein substrates and unfolds these before they are guided to HslV for hydrolysis. In Bacillus cereus (strain B4264), this protein is ATP-dependent protease ATPase subunit HslU.